Consider the following 995-residue polypeptide: UPF0182 protein MMAR_1371 (995 aa).

7 helical membrane-spanning segments follow: residues 18–38 (VLIL…RLID), 63–83 (FLVF…GLAL), 113–133 (LFGI…AQSY), 175–195 (FVAI…FGGI), 210–230 (IQLV…YWLD), 259–279 (KLIL…AIVL), and 287–307 (IGLV…PMIV). Positions 900-948 (AATGIQPTEGGAPANVPPNNAPSPEALPGTPPSPPTAVPPAPEASVTLS) are disordered. Over residues 928-941 (GTPPSPPTAVPPAP) the composition is skewed to pro residues.

Belongs to the UPF0182 family.

The protein localises to the cell membrane. The sequence is that of UPF0182 protein MMAR_1371 from Mycobacterium marinum (strain ATCC BAA-535 / M).